We begin with the raw amino-acid sequence, 348 residues long: Ion-translocating oxidoreductase complex subunit D (348 aa).

The next 5 helical transmembrane spans lie at 15 to 35 (LTAK…GMQA), 36 to 56 (YFFG…AVAI), 67 to 87 (PTAF…LAIS), 88 to 108 (IPPY…LLLA), and 125 to 145 (VAYA…LVPI). Threonine 186 is subject to FMN phosphoryl threonine. The next 5 helical transmembrane spans lie at 212-232 (LFAN…LLLI), 241-261 (IPAA…LLLP), 265-285 (LNVV…FIAT), 298-318 (LIFG…GNYP), and 320-340 (AVAF…HYTQ).

It belongs to the NqrB/RnfD family. In terms of assembly, the complex is composed of six subunits: RnfA, RnfB, RnfC, RnfD, RnfE and RnfG. It depends on FMN as a cofactor.

It localises to the cell inner membrane. Part of a membrane-bound complex that couples electron transfer with translocation of ions across the membrane. In Actinobacillus pleuropneumoniae serotype 5b (strain L20), this protein is Ion-translocating oxidoreductase complex subunit D.